Here is a 547-residue protein sequence, read N- to C-terminus: Chaperonin GroEL (547 aa).

Residues 30-33, Lys-51, 87-91, Gly-415, and Asp-495 contribute to the ATP site; these read TLGP and DGTTT.

This sequence belongs to the chaperonin (HSP60) family. Forms a cylinder of 14 subunits composed of two heptameric rings stacked back-to-back. Interacts with the co-chaperonin GroES.

The protein resides in the cytoplasm. It carries out the reaction ATP + H2O + a folded polypeptide = ADP + phosphate + an unfolded polypeptide.. Its function is as follows. Together with its co-chaperonin GroES, plays an essential role in assisting protein folding. The GroEL-GroES system forms a nano-cage that allows encapsulation of the non-native substrate proteins and provides a physical environment optimized to promote and accelerate protein folding. The polypeptide is Chaperonin GroEL (Bartonella quintana (strain Toulouse) (Rochalimaea quintana)).